Consider the following 565-residue polypeptide: Dihydroxy-acid dehydratase (565 aa).

Asp-80 serves as a coordination point for Mg(2+). Cys-121 serves as a coordination point for [2Fe-2S] cluster. Residues Asp-122 and Lys-123 each contribute to the Mg(2+) site. An N6-carboxylysine modification is found at Lys-123. Cys-194 serves as a coordination point for [2Fe-2S] cluster. Glu-447 is a binding site for Mg(2+). Ser-473 serves as the catalytic Proton acceptor.

Belongs to the IlvD/Edd family. In terms of assembly, homodimer. The cofactor is [2Fe-2S] cluster. Mg(2+) is required as a cofactor.

It carries out the reaction (2R)-2,3-dihydroxy-3-methylbutanoate = 3-methyl-2-oxobutanoate + H2O. The catalysed reaction is (2R,3R)-2,3-dihydroxy-3-methylpentanoate = (S)-3-methyl-2-oxopentanoate + H2O. It functions in the pathway amino-acid biosynthesis; L-isoleucine biosynthesis; L-isoleucine from 2-oxobutanoate: step 3/4. It participates in amino-acid biosynthesis; L-valine biosynthesis; L-valine from pyruvate: step 3/4. Functions in the biosynthesis of branched-chain amino acids. Catalyzes the dehydration of (2R,3R)-2,3-dihydroxy-3-methylpentanoate (2,3-dihydroxy-3-methylvalerate) into 2-oxo-3-methylpentanoate (2-oxo-3-methylvalerate) and of (2R)-2,3-dihydroxy-3-methylbutanoate (2,3-dihydroxyisovalerate) into 2-oxo-3-methylbutanoate (2-oxoisovalerate), the penultimate precursor to L-isoleucine and L-valine, respectively. This chain is Dihydroxy-acid dehydratase, found in Chlorobium phaeovibrioides (strain DSM 265 / 1930) (Prosthecochloris vibrioformis (strain DSM 265)).